Consider the following 455-residue polypeptide: Kynurenine 3-monooxygenase (455 aa).

It belongs to the aromatic-ring hydroxylase family. KMO subfamily. It depends on FAD as a cofactor.

It carries out the reaction L-kynurenine + NADPH + O2 + H(+) = 3-hydroxy-L-kynurenine + NADP(+) + H2O. It functions in the pathway cofactor biosynthesis; NAD(+) biosynthesis; quinolinate from L-kynurenine: step 1/3. In terms of biological role, catalyzes the hydroxylation of L-kynurenine (L-Kyn) to form 3-hydroxy-L-kynurenine (L-3OHKyn). Required for synthesis of quinolinic acid. This chain is Kynurenine 3-monooxygenase, found in Xanthomonas oryzae pv. oryzae (strain PXO99A).